The primary structure comprises 265 residues: Probable DNA replication complex GINS protein PSF3 (265 aa).

The disordered stretch occupies residues 180–265 (ISTSSNNKNN…KKRKRMFDDE (86 aa)). The span at 183-246 (SSNNKNNSSN…NNNNNSQNSS (64 aa)) shows a compositional bias: low complexity. A compositionally biased stretch (basic residues) spans 255–265 (VKKRKRMFDDE).

Belongs to the GINS3/PSF3 family. In terms of assembly, component of the GINS complex which is a heterotetramer of gins1, gins2, gins3 and gins4.

It is found in the nucleus. In terms of biological role, the GINS complex plays an essential role in the initiation of DNA replication. This is Probable DNA replication complex GINS protein PSF3 (gins3) from Dictyostelium discoideum (Social amoeba).